Consider the following 364-residue polypeptide: MGSISAIHHIEFIVSNALQSAYWYCSGFGFEKFAEKITDESTSIALRNGTARVIITSYNSQNIYTDQLIKHGDFIKDVSFRVDNLDAVLQNLVENDIKVIQQSEVSTKDGLVRTATLLSEGGDVTHTLFELGEFKGNFLPFFTPISNFELFENIEKMPAILMDHVVQNYPIGEMEAAADWYFKTMRLKRFWSVDDKVATSEFSAMTAWLLVNDDHTVQVTLAEGVKGRKGKSQIEEFINYHGGSGVQHFALLVEDIISAVQIMKSRSVEFLTIPSQYYDNLEERLSKTNLIVKEDLKMIRELNILMDFDENGYLLQIFSKPLQDRPTLFIEIIQRANFKGFGAGNFKALFDAVEREQEKRGTLF.

VOC domains lie at 6–134 (AIHH…LGEF) and 161–320 (LMDH…IFSK). Fe cation is bound by residues His164, His248, and Glu331.

The protein belongs to the 4HPPD family. Fe cation serves as cofactor.

This is Putative protein C31H2.4 from Caenorhabditis elegans.